A 437-amino-acid polypeptide reads, in one-letter code: Trigger factor (437 aa).

One can recognise a PPIase FKBP-type domain in the interval 174 to 260 (GDFVQISFEG…VKSLKKKIFP (87 aa)).

The protein belongs to the FKBP-type PPIase family. Tig subfamily.

The protein localises to the cytoplasm. It catalyses the reaction [protein]-peptidylproline (omega=180) = [protein]-peptidylproline (omega=0). In terms of biological role, involved in protein export. Acts as a chaperone by maintaining the newly synthesized protein in an open conformation. Functions as a peptidyl-prolyl cis-trans isomerase. In Koribacter versatilis (strain Ellin345), this protein is Trigger factor.